The primary structure comprises 416 residues: Photosystem II stability/assembly factor HCF136, chloroplastic (416 aa).

A chloroplast-targeting transit peptide spans 1–36 (MATTASLHLHLHLLLSSSRRRCRLLVPRAHTDSIST). The transit peptide at 37 to 67 (GRRRFIADTATASAAAAVGPLVLPRTPLARA) directs the protein to the thylakoid.

It belongs to the Ycf48 family.

The protein localises to the plastid. It is found in the chloroplast thylakoid lumen. In terms of biological role, essential for photosystem II (PSII) biogenesis; required for assembly of an early intermediate in PSII assembly that includes D2 (psbD) and cytochrome b559. The sequence is that of Photosystem II stability/assembly factor HCF136, chloroplastic (HCF136) from Oryza sativa subsp. japonica (Rice).